The following is a 217-amino-acid chain: Membrane-spanning 4-domains subfamily A member 6C (217 aa).

Positions 1-20 (MIPQVVTNETITTISPNGIN) are enriched in polar residues. A disordered region spans residues 1-33 (MIPQVVTNETITTISPNGINFPQKDESQPTQQR). The Cytoplasmic segment spans residues 1 to 46 (MIPQVVTNETITTISPNGINFPQKDESQPTQQRQDSLKKHLKAEIK). The helical transmembrane segment at 47 to 67 (VIVAIQIMCAVTVLALGIILA) threads the bilayer. The Extracellular segment spans residues 68-84 (SVPPVPYFNSVFSVLLK). The helical transmembrane segment at 85 to 105 (SGYPFIGALFFIASGILSIIT) threads the bilayer. Over 106–121 (ERKSTKPLVDASLTLN) the chain is Cytoplasmic. Residues 122–142 (ILSVSFAFVGIIIISVSLAGL) traverse the membrane as a helical segment. Residues 143–186 (HPASEQCKQSKELSLIEHDYYQPFYNSDRSECAVTKSILTGALS) are Extracellular-facing. Residues 187 to 207 (VMLIISVLELGLALLSAMLWL) form a helical membrane-spanning segment. The Cytoplasmic segment spans residues 208–217 (REGVLTSLRM).

Belongs to the MS4A family. As to expression, expressed only by thymus, spleen, peripheral lymph node and bone marrow.

The protein resides in the membrane. Its function is as follows. May be involved in signal transduction as a component of a multimeric receptor complex. This chain is Membrane-spanning 4-domains subfamily A member 6C (Ms4a6c), found in Mus musculus (Mouse).